A 142-amino-acid chain; its full sequence is DTPFECPSDWSTHRQYCYKFFQQKESWDDRSEYDAERFCSEQAKGGHLVSIESDEEADFVAQLVAPNIGKSKYYVWIGLRIENKKQQCSSKWSDYSSVSYENLVRGNVKKCFALEKKQGFRKWVNIDCVEGNPFVCKFIRPR.

Intrachain disulfides connect Cys-6/Cys-17, Cys-39/Cys-136, and Cys-111/Cys-128. One can recognise a C-type lectin domain in the interval His-13–Lys-137.

Belongs to the snaclec family. As to quaternary structure, heterodimer of subunits alpha and beta; disulfide-linked. As to expression, expressed by the venom gland.

It is found in the secreted. Its function is as follows. Binds to platelet GPIb (subunit alpha) (GP1BA) and functions as a receptor blocker for vWF binding to GPIb. The platelet GPIb-binding site resides on the GPIB-BP subunit beta and not on the alpha subunit. At a final concentration of 104 nM totally abolishes vWF-dependent shear-induced platelet aggregation (SIPA) at a high shear stress, but had no effect on SIPA at a low shear stress. In Bothrops jararaca (Jararaca), this protein is Snaclec GPIB-binding protein subunit alpha.